The following is a 248-amino-acid chain: 2,3-bisphosphoglycerate-dependent phosphoglycerate mutase (248 aa).

Residues 10–17 (RHGQSEWN), 23–24 (TG), Arg62, 89–92 (ERHY), Lys100, 116–117 (RR), and 183–184 (GN) contribute to the substrate site. The active-site Tele-phosphohistidine intermediate is the His11. Residue Glu89 is the Proton donor/acceptor of the active site.

Belongs to the phosphoglycerate mutase family. BPG-dependent PGAM subfamily.

The enzyme catalyses (2R)-2-phosphoglycerate = (2R)-3-phosphoglycerate. It functions in the pathway carbohydrate degradation; glycolysis; pyruvate from D-glyceraldehyde 3-phosphate: step 3/5. Functionally, catalyzes the interconversion of 2-phosphoglycerate and 3-phosphoglycerate. In Corynebacterium glutamicum (strain ATCC 13032 / DSM 20300 / JCM 1318 / BCRC 11384 / CCUG 27702 / LMG 3730 / NBRC 12168 / NCIMB 10025 / NRRL B-2784 / 534), this protein is 2,3-bisphosphoglycerate-dependent phosphoglycerate mutase.